The primary structure comprises 103 residues: Small ribosomal subunit protein uS10 (103 aa).

It belongs to the universal ribosomal protein uS10 family. In terms of assembly, part of the 30S ribosomal subunit.

In terms of biological role, involved in the binding of tRNA to the ribosomes. The protein is Small ribosomal subunit protein uS10 of Leptothrix cholodnii (strain ATCC 51168 / LMG 8142 / SP-6) (Leptothrix discophora (strain SP-6)).